We begin with the raw amino-acid sequence, 403 residues long: S-adenosylmethionine synthase (403 aa).

H17 is an ATP binding site. D19 is a Mg(2+) binding site. E45 contacts K(+). E58 and Q104 together coordinate L-methionine. The segment at 104-114 (QSPDIAQGVDT) is flexible loop. Residues 179 to 181 (DGK), 250 to 251 (KF), D259, 265 to 266 (RK), A282, and K286 each bind ATP. Residue D259 coordinates L-methionine. K290 serves as a coordination point for L-methionine.

It belongs to the AdoMet synthase family. Homotetramer; dimer of dimers. The cofactor is Mg(2+). Requires K(+) as cofactor.

Its subcellular location is the cytoplasm. The enzyme catalyses L-methionine + ATP + H2O = S-adenosyl-L-methionine + phosphate + diphosphate. It functions in the pathway amino-acid biosynthesis; S-adenosyl-L-methionine biosynthesis; S-adenosyl-L-methionine from L-methionine: step 1/1. Its function is as follows. Catalyzes the formation of S-adenosylmethionine (AdoMet) from methionine and ATP. The overall synthetic reaction is composed of two sequential steps, AdoMet formation and the subsequent tripolyphosphate hydrolysis which occurs prior to release of AdoMet from the enzyme. This Mycobacterium bovis (strain BCG / Pasteur 1173P2) protein is S-adenosylmethionine synthase.